Consider the following 98-residue polypeptide: uncharacterized protein (98 aa).

This sequence belongs to the HesB/IscA family.

This is an uncharacterized protein from Staphylococcus aureus (strain MRSA252).